Here is a 290-residue protein sequence, read N- to C-terminus: Ribosomal RNA small subunit methyltransferase H (290 aa).

S-adenosyl-L-methionine is bound by residues 35 to 37 (GGH), Asp54, Phe81, Asp97, and Gln104.

It belongs to the methyltransferase superfamily. RsmH family.

The protein resides in the cytoplasm. The enzyme catalyses cytidine(1402) in 16S rRNA + S-adenosyl-L-methionine = N(4)-methylcytidine(1402) in 16S rRNA + S-adenosyl-L-homocysteine + H(+). Its function is as follows. Specifically methylates the N4 position of cytidine in position 1402 (C1402) of 16S rRNA. The chain is Ribosomal RNA small subunit methyltransferase H from Picosynechococcus sp. (strain ATCC 27264 / PCC 7002 / PR-6) (Agmenellum quadruplicatum).